A 214-amino-acid polypeptide reads, in one-letter code: MGRRPARCYRYCKNKPYPKSRFCRGVPDAKIRIFDLGRKKAKVDEFPLCGHMVSDEYEQLSSEALEAARICANKYMVKSCGKDGFHIRVRLHPFHVIRINKMLSCAGADRLQTGMRGAFGKPQGTVARVHIGQVIMSIRTKLQNKEHVIEALRRAKFKFPGRQKIHISKKWGFTKFNADEFEDKVAAKRLIPDGCGVKYIPERGPLDKWRALHS.

Belongs to the universal ribosomal protein uL16 family. Component of a male germ cell-specific 60S large ribosomal subunit (LSU), which contains RPL10L and RPL39L, instead of RPL10 and RPL39 paralogs. The composition of the rest of the complex is similar to classical ribosomes. Testis-specific.

It localises to the cytoplasm. Testis-specific component of the ribosome, which is required for the transition from prophase to metaphase in male meiosis I. Compensates for the inactivated X-linked RPL10 paralog during spermatogenesis. The ribosome is a large ribonucleoprotein complex responsible for the synthesis of proteins in the cell. The male germ cell-specific ribosome displays a ribosomal polypeptide exit tunnel of distinct size and charge states compared with the classical ribosome. It is responsible for regulating the biosynthesis and folding of a subset of male germ-cell-specific proteins that are essential for the formation of sperm. The polypeptide is Large ribosomal subunit protein uL16-like (Mus musculus (Mouse)).